Consider the following 452-residue polypeptide: Tylactone mycaminosyltransferase (452 aa).

Residues 1–16 (MRRALDDRRRGPHGPE) are compositionally biased toward basic and acidic residues. Residues 1–20 (MRRALDDRRRGPHGPEGKPP) are disordered.

It belongs to the glycosyltransferase 28 family.

The catalysed reaction is tylactone + dTDP-alpha-D-mycaminose = 5-O-beta-D-mycaminosyltylactone + dTDP + H(+). It participates in antibiotic biosynthesis; tylosin biosynthesis. The activity of TylM2 is substantially increased by the addition of the accessory protein TylM3. Involved in the biosynthesis of the macrolide antibiotic tylosin derived from the polyketide lactone tylactone. Catalyzes the transfer of alpha-D-mycaminosyl from dTDP-alpha-D-mycaminose to the 5-hydroxyl group of tylactone to yield 5-O-mycaminosytylactone. It can also accept 16-membered tylactone and 12-membered ring macrolide. The chain is Tylactone mycaminosyltransferase from Streptomyces fradiae (Streptomyces roseoflavus).